The chain runs to 141 residues: Hemoglobin subunit alpha (141 aa).

The Globin domain occupies 1-141 (VLSPADKTNV…VSTVLTSKYR (141 aa)). Residue Ser-3 is modified to Phosphoserine. Position 7 is an N6-succinyllysine (Lys-7). Thr-8 is modified (phosphothreonine). Lys-11 is subject to N6-succinyllysine. Lys-16 is subject to N6-acetyllysine; alternate. Lys-16 bears the N6-succinyllysine; alternate mark. Tyr-24 bears the Phosphotyrosine mark. Ser-35 carries the post-translational modification Phosphoserine. Position 40 is an N6-succinyllysine (Lys-40). Ser-49 is subject to Phosphoserine. An O2-binding site is contributed by His-58. His-87 is a binding site for heme b. Phosphoserine is present on Ser-102. Phosphothreonine is present on Thr-108. The residue at position 124 (Ser-124) is a Phosphoserine. Thr-134 and Thr-137 each carry phosphothreonine. The residue at position 138 (Ser-138) is a Phosphoserine.

Belongs to the globin family. As to quaternary structure, heterotetramer of two alpha chains and two beta chains. In terms of tissue distribution, red blood cells.

Functionally, involved in oxygen transport from the lung to the various peripheral tissues. Its function is as follows. Hemopressin acts as an antagonist peptide of the cannabinoid receptor CNR1. Hemopressin-binding efficiently blocks cannabinoid receptor CNR1 and subsequent signaling. The protein is Hemoglobin subunit alpha (HBA) of Martes foina (Beech marten).